A 239-amino-acid chain; its full sequence is ATP-dependent dethiobiotin synthetase BioD (239 aa).

Gly-22–Val-27 lines the ATP pocket. Thr-26 serves as a coordination point for Mg(2+). The active site involves Lys-47. Thr-51 lines the substrate pocket. ATP is bound by residues Asp-59, Glu-124–Gly-127, and Asn-184–Arg-185. The Mg(2+) site is built by Asp-59 and Glu-124.

It belongs to the dethiobiotin synthetase family. As to quaternary structure, homodimer. Mg(2+) is required as a cofactor.

Its subcellular location is the cytoplasm. It catalyses the reaction (7R,8S)-7,8-diammoniononanoate + CO2 + ATP = (4R,5S)-dethiobiotin + ADP + phosphate + 3 H(+). It functions in the pathway cofactor biosynthesis; biotin biosynthesis; biotin from 7,8-diaminononanoate: step 1/2. Catalyzes a mechanistically unusual reaction, the ATP-dependent insertion of CO2 between the N7 and N8 nitrogen atoms of 7,8-diaminopelargonic acid (DAPA, also called 7,8-diammoniononanoate) to form a ureido ring. This Chlorobaculum tepidum (strain ATCC 49652 / DSM 12025 / NBRC 103806 / TLS) (Chlorobium tepidum) protein is ATP-dependent dethiobiotin synthetase BioD.